The chain runs to 592 residues: Peroxisomal targeting signal receptor (592 aa).

A Glycyl cysteine thioester (Cys-Gly) (interchain with G-Cter in ubiquitin) cross-link involves residue C10. An amphipathic helix 1 (AH1) region spans residues 11–33 (SVNGNAVAQFNKHTQQDRSLQQQ). A Glycyl lysine isopeptide (Lys-Gly) (interchain with G-Cter in ubiquitin) cross-link involves residue K22. The span at 22 to 46 (KHTQQDRSLQQQVANQHGNVAQNQG) shows a compositional bias: polar residues. The tract at residues 22–49 (KHTQQDRSLQQQVANQHGNVAQNQGFKK) is disordered. The segment at 58–76 (RANLDQFMNNGAPQNSFQF) is amphipathic helix 2 (AH2). 3 short sequence motifs (wxxxF/Y motif) span residues 100–104 (WSQDF), 128–132 (WASEF), and 185–189 (WENQF). Residues 223-239 (FQEVWDSLNSESFENDF) form an amphipathic helix 4 (AH4) region. The short motif at 262-266 (WEKDF) is the WxxxF/Y motif 4 element. TPR repeat units follow at residues 295 to 329 (DQDPYEIGLQLMENGAKLSEAALAFEAAIQRDENH), 330 to 363 (VDAWLKLGEVQTQNEKEIAGISALEKCLELHPEN), 440 to 473 (ADVQMGLGVLFYANEEFDKTIDCFKAALSIRPDD), 475 to 507 (ILWNRLGASLANSNRSEEAVDAYFKALQLKPTF), and 509 to 541 (RARYNLGVSCINIGCYKEAAEHLLSGLSMHQVE).

It belongs to the peroxisomal targeting signal receptor family. As to quaternary structure, interacts (via WxxxF/Y and LVxEF motifs) with PEX14; promoting translocation through the PEX13-PEX14 docking complex. Monoubiquitinated at Cys-10 by PEX2 during PEX5 passage through the retrotranslocation channel: monoubiquitination acts as a signal for PEX5 extraction and is required for proper export from peroxisomes and recycling. When PEX5 recycling is compromised, polyubiquitinated at Lys-22 by PEX10 during its passage through the retrotranslocation channel, leading to its degradation.

The protein localises to the cytoplasm. The protein resides in the cytosol. It localises to the peroxisome matrix. Functionally, receptor that mediates peroxisomal import of proteins containing a C-terminal PTS1-type tripeptide peroxisomal targeting signal (SKL-type). Binds to cargo proteins containing a PTS1 peroxisomal targeting signal in the cytosol, and translocates them into the peroxisome matrix by passing through the PEX13-PEX14 docking complex along with cargo proteins. PEX5 receptor is then retrotranslocated into the cytosol, leading to release of bound cargo in the peroxisome matrix, and reset for a subsequent peroxisome import cycle. The polypeptide is Peroxisomal targeting signal receptor (PEX5) (Candida albicans (strain SC5314 / ATCC MYA-2876) (Yeast)).